Reading from the N-terminus, the 307-residue chain is 2-dehydropantoate 2-reductase (307 aa).

Residues 7 to 12 (GSGAMG), Asn102, and Ala128 each bind NADP(+). Residue Asn102 coordinates substrate. The active-site Proton donor is the Lys184. Positions 188, 192, and 255 each coordinate substrate. Glu268 is an NADP(+) binding site.

This sequence belongs to the ketopantoate reductase family.

It localises to the cytoplasm. The catalysed reaction is (R)-pantoate + NADP(+) = 2-dehydropantoate + NADPH + H(+). The protein operates within cofactor biosynthesis; (R)-pantothenate biosynthesis; (R)-pantoate from 3-methyl-2-oxobutanoate: step 2/2. In terms of biological role, catalyzes the NADPH-dependent reduction of ketopantoate into pantoic acid. The sequence is that of 2-dehydropantoate 2-reductase (apbA) from Streptococcus pyogenes serotype M18 (strain MGAS8232).